A 1391-amino-acid chain; its full sequence is DNA-directed RNA polymerase subunit beta' (1391 aa).

Cysteine 72, cysteine 74, cysteine 87, and cysteine 90 together coordinate Zn(2+). The Mg(2+) site is built by aspartate 462, aspartate 464, and aspartate 466. Residues cysteine 816, cysteine 890, cysteine 897, and cysteine 900 each coordinate Zn(2+).

This sequence belongs to the RNA polymerase beta' chain family. As to quaternary structure, the RNAP catalytic core consists of 2 alpha, 1 beta, 1 beta' and 1 omega subunit. When a sigma factor is associated with the core the holoenzyme is formed, which can initiate transcription. It depends on Mg(2+) as a cofactor. Zn(2+) serves as cofactor.

It catalyses the reaction RNA(n) + a ribonucleoside 5'-triphosphate = RNA(n+1) + diphosphate. In terms of biological role, DNA-dependent RNA polymerase catalyzes the transcription of DNA into RNA using the four ribonucleoside triphosphates as substrates. This chain is DNA-directed RNA polymerase subunit beta', found in Neisseria meningitidis serogroup A / serotype 4A (strain DSM 15465 / Z2491).